Here is a 461-residue protein sequence, read N- to C-terminus: Ufm1-specific protease 2 (461 aa).

Residues cysteine 294, aspartate 418, and histidine 420 contribute to the active site.

Belongs to the peptidase C78 family. Expressed at high level in brain, kidney, stomach, skeletal muscle, liver, pancreas, spleen and testis.

Its subcellular location is the endoplasmic reticulum. It localises to the cytoplasm. The protein resides in the nucleus. Thiol-dependent isopeptidase that specifically cleaves UFM1, a ubiquitin-like modifier protein, from conjugated proteins, such as CD274/PD-L1, CYB5R3, DDRGK1, MRE11, RPL26/uL24, TRIP4 and RPL26/uL24. While it is also able to mediate the processing of UFM1 precursors, a prerequisite for conjugation reactions, UFSP2 mainly acts as a protein deUFMylase that mediates deconjugation of UFM1 from target proteins. Mediates deUFMylation of RPL26/uL24, a critical step to release the UFM1 ribosome E3 ligase (UREL) complex during the recycling of 60S ribosome subunits from the endoplasmic reticulum. Catalyzes deUFMylation of TRIP4, regulating intracellular nuclear receptors transactivation and thereby regulate cell proliferation and differentiation. The sequence is that of Ufm1-specific protease 2 from Mus musculus (Mouse).